Here is a 427-residue protein sequence, read N- to C-terminus: Serine hydroxymethyltransferase (427 aa).

A (6S)-5,6,7,8-tetrahydrofolate-binding site is contributed by 120 to 122 (GHI). Lys-226 bears the N6-(pyridoxal phosphate)lysine mark.

It belongs to the SHMT family. Homodimer. It depends on pyridoxal 5'-phosphate as a cofactor.

It localises to the cytoplasm. The protein operates within amino-acid biosynthesis; glycine biosynthesis; glycine from L-serine: step 1/1. In terms of biological role, catalyzes the reversible interconversion of serine and glycine with a modified folate serving as the one-carbon carrier. Also exhibits a pteridine-independent aldolase activity toward beta-hydroxyamino acids, producing glycine and aldehydes, via a retro-aldol mechanism. This is Serine hydroxymethyltransferase from Pyrococcus furiosus (strain ATCC 43587 / DSM 3638 / JCM 8422 / Vc1).